The primary structure comprises 245 residues: 5-oxoprolinase subunit A (245 aa).

This sequence belongs to the LamB/PxpA family. In terms of assembly, forms a complex composed of PxpA, PxpB and PxpC.

The catalysed reaction is 5-oxo-L-proline + ATP + 2 H2O = L-glutamate + ADP + phosphate + H(+). Functionally, catalyzes the cleavage of 5-oxoproline to form L-glutamate coupled to the hydrolysis of ATP to ADP and inorganic phosphate. The protein is 5-oxoprolinase subunit A of Haemophilus influenzae (strain 86-028NP).